A 139-amino-acid polypeptide reads, in one-letter code: ATP synthase epsilon chain (139 aa).

It belongs to the ATPase epsilon chain family. F-type ATPases have 2 components, CF(1) - the catalytic core - and CF(0) - the membrane proton channel. CF(1) has five subunits: alpha(3), beta(3), gamma(1), delta(1), epsilon(1). CF(0) has three main subunits: a, b and c.

Its subcellular location is the cell inner membrane. Functionally, produces ATP from ADP in the presence of a proton gradient across the membrane. This Salmonella typhimurium (strain LT2 / SGSC1412 / ATCC 700720) protein is ATP synthase epsilon chain.